A 106-amino-acid chain; its full sequence is Iron-sulfur cluster assembly protein CyaY (106 aa).

This sequence belongs to the frataxin family.

Its function is as follows. Involved in iron-sulfur (Fe-S) cluster assembly. May act as a regulator of Fe-S biogenesis. The chain is Iron-sulfur cluster assembly protein CyaY from Salmonella dublin (strain CT_02021853).